We begin with the raw amino-acid sequence, 253 residues long: Small ribosomal subunit protein uS3 (253 aa).

The 69-residue stretch at 39–107 (VRRALKKRLY…EVHLNIVEIR (69 aa)) folds into the KH type-2 domain. The tract at residues 215 to 253 (LDKRLAGESGPAGEGGGRERGDRPDRGPRRERRGEPSNA) is disordered. The segment covering 230 to 253 (GGRERGDRPDRGPRRERRGEPSNA) has biased composition (basic and acidic residues).

Belongs to the universal ribosomal protein uS3 family. In terms of assembly, part of the 30S ribosomal subunit. Forms a tight complex with proteins S10 and S14.

In terms of biological role, binds the lower part of the 30S subunit head. Binds mRNA in the 70S ribosome, positioning it for translation. This chain is Small ribosomal subunit protein uS3, found in Phenylobacterium zucineum (strain HLK1).